The following is a 226-amino-acid chain: MEHRVFTVANFFSSNHDFITGFFVVLTAVLMFLISLGASRKMQMVPMGLQNVYESIISAILSVAKDIIGEELARKYFPLAGTIALYVFFSNMIGIIPSFESPTASWSFTLVLALIVFFYYHFEGIRVQGFFKYFAHFAGPVKWLAPFMFPIEIISHFSRIVSLSFRLFGNIKGDDMFLLIMLLLVPWVIPVAPFMVLFFMGILQAFVFMILTYVYLAGAVLTDEGH.

The next 6 helical transmembrane spans lie at 18-38, 76-96, 105-125, 134-154, 179-199, and 201-221; these read FITG…SLGA, YFPL…IGII, SWSF…FEGI, FAHF…IEII, LIML…VLFF, and GILQ…GAVL.

It belongs to the ATPase A chain family. As to quaternary structure, F-type ATPases have 2 components, CF(1) - the catalytic core - and CF(0) - the membrane proton channel. CF(1) has five subunits: alpha(3), beta(3), gamma(1), delta(1), epsilon(1). CF(0) has three main subunits: a(1), b(2) and c(9-12). The alpha and beta chains form an alternating ring which encloses part of the gamma chain. CF(1) is attached to CF(0) by a central stalk formed by the gamma and epsilon chains, while a peripheral stalk is formed by the delta and b chains.

It is found in the cell inner membrane. Its function is as follows. Key component of the proton channel; it plays a direct role in the translocation of protons across the membrane. The chain is ATP synthase subunit a from Helicobacter acinonychis (strain Sheeba).